A 319-amino-acid chain; its full sequence is Probable alcohol dehydrogenase (319 aa).

Zn(2+) contacts are provided by C18, H39, C68, C71, C74, C82, and C149.

It belongs to the zinc-containing alcohol dehydrogenase family. Requires Zn(2+) as cofactor.

It carries out the reaction a primary alcohol + NAD(+) = an aldehyde + NADH + H(+). It catalyses the reaction a secondary alcohol + NAD(+) = a ketone + NADH + H(+). The polypeptide is Probable alcohol dehydrogenase (terPD) (Pseudomonas sp).